A 225-amino-acid polypeptide reads, in one-letter code: UPF0700 transmembrane protein YoaK (225 aa).

The next 6 membrane-spanning stretches (helical) occupy residues 10–30 (LLSLLCLTAGIVDVIGYLSLG), 56–76 (VFNSLTALIGFICGVIIATLM), 99–119 (ILFVFACLSFYRAFVPVHILI), 137–157 (GIAGISSTVLTGTLASLLEDI), 174–194 (TVLRALAIILYCVGAIIVALA), and 197–217 (DFYHFIIWVPIVLIFGIMMTA).

This sequence belongs to the UPF0700 family.

Its subcellular location is the cell membrane. This Bacillus subtilis (strain 168) protein is UPF0700 transmembrane protein YoaK (yoaK).